Here is a 125-residue protein sequence, read N- to C-terminus: Small ribosomal subunit protein uS12 (125 aa).

Position 89 is a 3-methylthioaspartic acid (aspartate 89).

This sequence belongs to the universal ribosomal protein uS12 family. Part of the 30S ribosomal subunit. Contacts proteins S8 and S17. May interact with IF1 in the 30S initiation complex.

In terms of biological role, with S4 and S5 plays an important role in translational accuracy. Functionally, interacts with and stabilizes bases of the 16S rRNA that are involved in tRNA selection in the A site and with the mRNA backbone. Located at the interface of the 30S and 50S subunits, it traverses the body of the 30S subunit contacting proteins on the other side and probably holding the rRNA structure together. The combined cluster of proteins S8, S12 and S17 appears to hold together the shoulder and platform of the 30S subunit. The chain is Small ribosomal subunit protein uS12 from Ralstonia nicotianae (strain ATCC BAA-1114 / GMI1000) (Ralstonia solanacearum).